The following is a 375-amino-acid chain: STAGKVIKCKAAVVWEPKKPFSIVEIEVAPPKAHEVRIKILASGICRSDDHVLSGALKVNFPIILGHEAAGVVESVGEGVTSMKPGDKVIPIFLPQCGECNSCRHPRGNVCKKSELGPFTGLLYDGTSRFTYQGKPVYHFVRTGTFTEYTVAPEDSVVKIDASAPLEKVCLIGCGFSTGYGAAINSAKVQPGSTCAVFGLGGVGLSAVMGCKAAGASRIIGIDINKEKFPKAKELGATECVNPLDYKKPINEVLFDMTDGEGVEYSFEVIGRTDTMTAALASCHNNYGTSVIVGVPPSASQIAFDPLLLFTGRTWKGSVFGGWKSKDAVPRLVSDFMGKKFILDPLITHTMPFEKINEGFELLRSGKSIRTVLTF.

Position 1 is an N-acetylserine (Ser1). Zn(2+) is bound by residues Cys46, His67, Cys97, Cys100, Cys103, Cys111, and Cys174. NAD(+)-binding positions include 199–204 (GLGGVG), Asp223, Lys228, 293–295 (VGV), and Arg370.

It belongs to the zinc-containing alcohol dehydrogenase family. Class-I subfamily. As to quaternary structure, multimeric (with different ratios of monomers). Requires Zn(2+) as cofactor.

It is found in the cytoplasm. The enzyme catalyses a primary alcohol + NAD(+) = an aldehyde + NADH + H(+). It carries out the reaction a secondary alcohol + NAD(+) = a ketone + NADH + H(+). In Saara hardwickii (Indian spiny-tailed lizard), this protein is Alcohol dehydrogenase 1B.